The chain runs to 993 residues: MVLRSRLPPWIMLCSVWLLRFAHTGEAQAAKEVILLDSKAQQTELEWISSPPNGWEEISGLDENYTPIRTYQVCQVMESNQNNWLRTNWIAKSNAQRIFVELKFTLRDCNSLPGVLGTCKETFNLYYYETDYDTGRNIRENQYVKIDTIAADESFTQGDLGERKMKLNTEVREIGPLSKKGFYLAFQDVGACIALVSVKVYYKKCWSIIENLAIFPDTVTGSEFSSLVEVRGTCVSSAEEEAENSPKMHCSAEGEWLVPIGKCICKAGYQQKGDTCEPCGRGFYKSSSQDLQCSRCPTHSFSDKEGSSRCDCEDSYYRAPSDPPYVACTRPPSAPQNLIFNINQTTVSLEWSPPADNGGRNDVTYRILCKRCSWEQGECVPCGSNIGYMPQQTGLVDNYVTVMDLLAHANYTFEVEAVNGVSDLSRSQRLFAAVSITTGQAAPSQVSGVMKERVLQRSVELSWQEPEHPNGVITEYEIKYYEKDQRERTYSTVKTKSTSASINNLKPGTVYVFQIRAFTAAGYGNYSPRLDVATLEEATATAVSSEQNPVIIIAVVAVAGTIILVFMVFGFIIGRRHCGYSKADQEGDEELYFHFKFPGTKTYIDPETYEDPNRAVHQFAKELDASCIKIERVIGAGEFGEVCSGRLKLPGKRDVAVAIKTLKVGYTEKQRRDFLCEASIMGQFDHPNVVHLEGVVTRGKPVMIVIEYMENGALDAFLRKHDGQFTVIQLVGMLRGIAAGMRYLADMGYVHRDLAARNILVNSNLVCKVSDFGLSRVIEDDPEAVYTTTGGKIPVRWTAPEAIQYRKFTSASDVWSYGIVMWEVMSYGERPYWDMSNQDVIKAIEEGYRLPAPMDCPAGLHQLMLDCWQKERGERPKFEQIVGILDKMIRNPNSLKTPLGTCSRPISPLLDQNTPDFTTFCSVGEWLQAIKMERYKDNFTAAGYNSLESVARMTIEDVMSLGITLVGHQKKIMSSIQTMRAQMLHLHGTGIQV.

Residues 1 to 27 (MVLRSRLPPWIMLCSVWLLRFAHTGEA) form the signal peptide. The Extracellular segment spans residues 28 to 550 (QAAKEVILLD…TAVSSEQNPV (523 aa)). In terms of domain architecture, Eph LBD spans 32–210 (EVILLDSKAQ…YYKKCWSIIE (179 aa)). 2 Fibronectin type-III domains span residues 331 to 441 (PPSA…TGQA) and 442 to 537 (APSQ…TLEE). N-linked (GlcNAc...) asparagine glycosylation is found at asparagine 343 and asparagine 410. A helical membrane pass occupies residues 551-571 (IIIAVVAVAGTIILVFMVFGF). Over 572-993 (IIGRRHCGYS…LHLHGTGIQV (422 aa)) the chain is Cytoplasmic. Residues tyrosine 603 and tyrosine 609 each carry the phosphotyrosine; by autocatalysis modification. Residues 628-889 (IKIERVIGAG…QIVGILDKMI (262 aa)) enclose the Protein kinase domain. Residues 634–642 (IGAGEFGEV) and lysine 660 contribute to the ATP site. The active-site Proton acceptor is the aspartate 753. Phosphotyrosine; by autocatalysis is present on residues tyrosine 786 and tyrosine 935. Residues 918–982 (TTFCSVGEWL…MSSIQTMRAQ (65 aa)) enclose the SAM domain. Positions 991–993 (IQV) match the PDZ-binding motif.

This sequence belongs to the protein kinase superfamily. Tyr protein kinase family. Ephrin receptor subfamily. As to quaternary structure, heterotetramer upon binding of the ligand. The heterotetramer is composed of an ephrin dimer and a receptor dimer. Oligomerization is probably required to induce biological responses. Phosphorylated.

The protein localises to the cell membrane. It carries out the reaction L-tyrosyl-[protein] + ATP = O-phospho-L-tyrosyl-[protein] + ADP + H(+). Its function is as follows. Receptor tyrosine kinase which binds promiscuously GPI-anchored ephrin-A family ligands residing on adjacent cells, leading to contact-dependent bidirectional signaling into neighboring cells. The signaling pathway downstream of the receptor is referred to as forward signaling while the signaling pathway downstream of the ephrin ligand is referred to as reverse signaling. Among GPI-anchored ephrin-A ligands, EFNA5 is a cognate/functional ligand for EPHA7 and their interaction regulates brain development modulating cell-cell adhesion and repulsion. Has a repellent activity on axons and is for instance involved in the guidance of corticothalamic axons and in the proper topographic mapping of retinal axons to the colliculus. May also regulate brain development through a caspase(CASP3)-dependent proapoptotic activity. Forward signaling may result in activation of components of the ERK signaling pathway including MAP2K1, MAP2K2, MAPK1 and MAPK3 which are phosphorylated upon activation of EPHA7. The chain is Ephrin type-A receptor 7 (EPHA7) from Gallus gallus (Chicken).